A 273-amino-acid chain; its full sequence is Large ribosomal subunit protein uL2 (273 aa).

The disordered stretch occupies residues 213-261 (WLGKRPQSRGVAMNPVDHPHGGGEGKSSGGRHPVTPWGVPTKGYKTRVN).

Belongs to the universal ribosomal protein uL2 family. In terms of assembly, part of the 50S ribosomal subunit. Forms a bridge to the 30S subunit in the 70S ribosome.

Its function is as follows. One of the primary rRNA binding proteins. Required for association of the 30S and 50S subunits to form the 70S ribosome, for tRNA binding and peptide bond formation. It has been suggested to have peptidyltransferase activity; this is somewhat controversial. Makes several contacts with the 16S rRNA in the 70S ribosome. The polypeptide is Large ribosomal subunit protein uL2 (Syntrophotalea carbinolica (strain DSM 2380 / NBRC 103641 / GraBd1) (Pelobacter carbinolicus)).